A 234-amino-acid polypeptide reads, in one-letter code: Small ribosomal subunit protein uS3 (234 aa).

Residues 39–107 (IRKMLKERLK…EVHLNLVEVR (69 aa)) form the KH type-2 domain. The span at 215–227 (QERRLQESGEQRA) shows a compositional bias: basic and acidic residues. Residues 215 to 234 (QERRLQESGEQRARSGRQAA) are disordered.

It belongs to the universal ribosomal protein uS3 family. In terms of assembly, part of the 30S ribosomal subunit. Forms a tight complex with proteins S10 and S14.

In terms of biological role, binds the lower part of the 30S subunit head. Binds mRNA in the 70S ribosome, positioning it for translation. The polypeptide is Small ribosomal subunit protein uS3 (Maricaulis maris (strain MCS10) (Caulobacter maris)).